The primary structure comprises 610 residues: Elongation factor 4 (610 aa).

The region spanning 11–193 is the tr-type G domain; sequence EKIRNFSIIA…QIVEKVPAPT (183 aa). Residues 23–28 and 140–143 contribute to the GTP site; these read DHGKST and NKID.

This sequence belongs to the TRAFAC class translation factor GTPase superfamily. Classic translation factor GTPase family. LepA subfamily.

It is found in the cell membrane. The catalysed reaction is GTP + H2O = GDP + phosphate + H(+). Its function is as follows. Required for accurate and efficient protein synthesis under certain stress conditions. May act as a fidelity factor of the translation reaction, by catalyzing a one-codon backward translocation of tRNAs on improperly translocated ribosomes. Back-translocation proceeds from a post-translocation (POST) complex to a pre-translocation (PRE) complex, thus giving elongation factor G a second chance to translocate the tRNAs correctly. Binds to ribosomes in a GTP-dependent manner. The chain is Elongation factor 4 from Streptococcus suis (strain 98HAH33).